The primary structure comprises 198 residues: Recombination protein RecR (198 aa).

Residues 56–71 (CKICHSLTENEICDIC) form a C4-type zinc finger. The 96-residue stretch at 79–174 (HLLCVVESPA…HMTRIAQGVP (96 aa)) folds into the Toprim domain.

The protein belongs to the RecR family.

Its function is as follows. May play a role in DNA repair. It seems to be involved in an RecBC-independent recombinational process of DNA repair. It may act with RecF and RecO. In Acinetobacter baylyi (strain ATCC 33305 / BD413 / ADP1), this protein is Recombination protein RecR.